The chain runs to 165 residues: Transcriptional repressor NrdR (165 aa).

A zinc finger spans residues 3 to 34; sequence CPFCSANDTKVIDSRLVSDGHQVRRRRECLAC. In terms of domain architecture, ATP-cone spans 49-139; the sequence is PRIIKRDGSR…VYLSFEDISE (91 aa).

This sequence belongs to the NrdR family. Requires Zn(2+) as cofactor.

Functionally, negatively regulates transcription of bacterial ribonucleotide reductase nrd genes and operons by binding to NrdR-boxes. This chain is Transcriptional repressor NrdR, found in Colwellia psychrerythraea (strain 34H / ATCC BAA-681) (Vibrio psychroerythus).